A 380-amino-acid chain; its full sequence is Probable protein phosphatase 2C 27 (380 aa).

Residues 84 to 344 enclose the PPM-type phosphatase domain; it reads RSGSCAEQGA…DNLTVIVVCF (261 aa). Mn(2+)-binding residues include aspartate 128, glycine 129, aspartate 292, and aspartate 335.

Belongs to the PP2C family. Requires Mg(2+) as cofactor. The cofactor is Mn(2+). As to expression, expressed in roots, leaves, stems, flower, and trichomes.

The protein resides in the nucleus. Its subcellular location is the cytoplasm. The enzyme catalyses O-phospho-L-seryl-[protein] + H2O = L-seryl-[protein] + phosphate. The catalysed reaction is O-phospho-L-threonyl-[protein] + H2O = L-threonyl-[protein] + phosphate. In terms of biological role, confers salt tolerance by triggering the expression of stress-responsive genes. The sequence is that of Probable protein phosphatase 2C 27 from Arabidopsis thaliana (Mouse-ear cress).